The sequence spans 1107 residues: Membrane-associated guanylate kinase, WW and PDZ domain-containing protein 3 (1107 aa).

Positions 17-102 (ECGLSGVGGD…PIRLKTVKPG (86 aa)) constitute a PDZ 1 domain. The Guanylate kinase-like domain occupies 110-284 (RHYLSLQFQK…SMDFRNYLTR (175 aa)). Residue 117 to 124 (FQKGSIDH) coordinates ATP. Residues 210 to 277 (FDTETQRKRT…SYNQTNSSMD (68 aa)) form a disordered region. Residues 220–231 (TSVSKMQRTDSS) show a composition bias toward polar residues. The span at 232 to 241 (LPEEEDEEER) shows a compositional bias: acidic residues. Residues 251-261 (TDHRDRQEPSE) are compositionally biased toward basic and acidic residues. Residues 267–277 (PSYNQTNSSMD) are compositionally biased toward polar residues. 2 consecutive WW domains span residues 289-322 (EPLPKNWEMAYTEAGMIYFIDHNTKTTTWLDPRL) and 335-368 (GELPYGWEKIEDPQYGTYYVDHINQKTQFDNPVL). Positions 374–398 (KQLNPAPSEGTVHQEPENSQFTRDP) are disordered. 4 PDZ domains span residues 407–489 (HTSL…TLCR), 577–653 (TIPL…LILR), 727–809 (DVFL…TVRR), and 853–940 (DVIL…IAEE). Residues 941-975 (EHRGPPSGSNSARQSPAPQHRPMGQTQPTYGTLDR) form a disordered region. The segment covering 947–957 (SGSNSARQSPA) has biased composition (polar residues). Positions 1003 to 1085 (PVELERGPRG…KVLLLLRPGT (83 aa)) constitute a PDZ 6 domain.

Belongs to the MAGUK family.

The protein localises to the cell membrane. The protein resides in the cell junction. It is found in the tight junction. In terms of biological role, acts as a scaffolding protein at cell-cell junctions, thereby regulating various cellular and signaling processes. The protein is Membrane-associated guanylate kinase, WW and PDZ domain-containing protein 3 (magi3) of Xenopus tropicalis (Western clawed frog).